A 112-amino-acid chain; its full sequence is Tyrosine-protein phosphatase 17 (112 aa).

Positions 1–112 (WRMIWEHECC…QPHTAGPIVV (112 aa)) constitute a Tyrosine-protein phosphatase domain. Asp-82 is a binding site for substrate.

This sequence belongs to the protein-tyrosine phosphatase family.

It catalyses the reaction O-phospho-L-tyrosyl-[protein] + H2O = L-tyrosyl-[protein] + phosphate. This is Tyrosine-protein phosphatase 17 (STY-17) from Styela plicata (Wrinkled sea squirt).